We begin with the raw amino-acid sequence, 553 residues long: Hydroxylamine reductase (553 aa).

[2Fe-2S] cluster is bound by residues Cys3, Cys6, Cys18, and Cys25. Residues His252, Glu276, Cys320, Cys408, Cys436, Cys461, Glu495, and Lys497 each coordinate hybrid [4Fe-2O-2S] cluster. The residue at position 408 (Cys408) is a Cysteine persulfide.

Belongs to the HCP family. [2Fe-2S] cluster is required as a cofactor. It depends on hybrid [4Fe-2O-2S] cluster as a cofactor.

It is found in the cytoplasm. It carries out the reaction A + NH4(+) + H2O = hydroxylamine + AH2 + H(+). Functionally, catalyzes the reduction of hydroxylamine to form NH(3) and H(2)O. This Aliivibrio fischeri (strain ATCC 700601 / ES114) (Vibrio fischeri) protein is Hydroxylamine reductase.